The following is a 175-amino-acid chain: Putative carbonic anhydrase-like protein YbcF (175 aa).

The protein belongs to the beta-class carbonic anhydrase family.

The chain is Putative carbonic anhydrase-like protein YbcF (ybcF) from Bacillus subtilis (strain 168).